Reading from the N-terminus, the 130-residue chain is Small ribosomal subunit protein uS11 (130 aa).

This sequence belongs to the universal ribosomal protein uS11 family. Part of the 30S ribosomal subunit. Interacts with proteins S7 and S18. Binds to IF-3.

In terms of biological role, located on the platform of the 30S subunit, it bridges several disparate RNA helices of the 16S rRNA. Forms part of the Shine-Dalgarno cleft in the 70S ribosome. The polypeptide is Small ribosomal subunit protein uS11 (Nitratiruptor sp. (strain SB155-2)).